Consider the following 122-residue polypeptide: UPF0382 membrane protein SH2409 (122 aa).

Helical transmembrane passes span 3 to 23, 46 to 66, 69 to 89, and 98 to 118; these read LFIILGALCTMMSVGTGAFGA, MYHGLGLIIIGVISGTTSINV, AGWLLFLGVVFFSGSLYILAL, and ITPIGGLLFIAGWLMLIISTF.

Belongs to the UPF0382 family.

It localises to the cell membrane. The polypeptide is UPF0382 membrane protein SH2409 (Staphylococcus haemolyticus (strain JCSC1435)).